Here is a 105-residue protein sequence, read N- to C-terminus: Photosystem II 5 kDa protein, chloroplastic (105 aa).

Residues 1–77 (MASITMTTSF…ICSVAGVATA (77 aa)) constitute a chloroplast transit peptide.

Post-translationally, the maturation of the PSII-T precursor to its final form occurs through a two step process. First, a stromal intermediate is formed, which, upon translocation into the thylakoid membrane, is processed to the mature protein.

It is found in the plastid. The protein localises to the chloroplast thylakoid membrane. Functionally, may be a component of the oxygen-evolving complex. This chain is Photosystem II 5 kDa protein, chloroplastic (PSBT), found in Gossypium hirsutum (Upland cotton).